The primary structure comprises 1003 residues: Putative helicase MOV-10 (1003 aa).

Position 148 is an N6-acetyllysine (K148). 2 positions are modified to phosphothreonine: T160 and T254. The residue at position 432 (S432) is a Phosphoserine. 524 to 531 (GPPGTGKT) is an ATP binding site. The DEAG box signature appears at 645 to 648 (DEAG). The interaction with AGO2 and APOBEC3G stretch occupies residues 921-965 (NPLLLGHDPDWKVFLEFCKENGGYTGCPFPAKLDLQQGQNLLQGL). The disordered stretch occupies residues 968 to 1003 (LSPSTSGLKSHDYLPQEREGEEGLSLQVEPEWRNEL). Residues S969 and S977 each carry the phosphoserine modification. The span at 976-985 (KSHDYLPQER) shows a compositional bias: basic and acidic residues.

Belongs to the DNA2/NAM7 helicase family. SDE3 subfamily. As to quaternary structure, interacts with DICER1, AGO2, TARBP2, EIF6 and RPL7A (60S ribosome subunit); they form a large RNA-induced silencing complex (RISC). Interacts with APOBEC3G in an RNA-dependent manner. Interacts with TRIM71 (via NHL repeats) in an RNA-dependent manner. Interacts with both protein products of LIRE1, ORF1p and ORF2p. Interacts with TUT4 and, to a lesser extent, TUT7; the interactions are RNA-dependent. Interacts with AGO2, TNRC6B and UPF1; the interactions are direct and RNA-dependent. Interacts with FMR1; this interaction is direct, occurs in an RNA-dependent manner on polysomes and induces association of MOV10 with RNAs. Interacts with SHFL; the interaction increases in presence of RNA. Interacts with DHX34; the interaction is-RNA independent. Interacts with RBM46. In terms of processing, ubiquitinated by the DCX(DCAF12) complex that specifically recognizes the glutamate-leucine (Glu-Leu) degron at the C-terminus, leading to its degradation.

The protein resides in the cytoplasm. The protein localises to the P-body. It localises to the cytoplasmic ribonucleoprotein granule. Its subcellular location is the stress granule. It is found in the nucleus. The enzyme catalyses ATP + H2O = ADP + phosphate + H(+). Functionally, 5' to 3' RNA helicase that is involved in a number of cellular roles ranging from mRNA metabolism and translation, modulation of viral infectivity, inhibition of retrotransposition, or regulation of synaptic transmission. Plays an important role in innate antiviral immunity by promoting type I interferon production. Mechanistically, specifically uses IKKepsilon/IKBKE as the mediator kinase for IRF3 activation. Contributes to UPF1 mRNA target degradation by translocation along 3' UTRs. Required for microRNA (miRNA)-mediated gene silencing by the RNA-induced silencing complex (RISC). Required for both miRNA-mediated translational repression and miRNA-mediated cleavage of complementary mRNAs by RISC. In cooperation with FMR1, regulates miRNA-mediated translational repression by AGO2. Restricts retrotransposition of long interspersed element-1 (LINE-1) in cooperation with TUT4 and TUT7 counteracting the RNA chaperonne activity of L1RE1. Facilitates LINE-1 uridylation by TUT4 and TUT7. Required for embryonic viability and for normal central nervous system development and function. Plays two critical roles in early brain development: suppresses retroelements in the nucleus by directly inhibiting cDNA synthesis, while regulates cytoskeletal mRNAs to influence neurite outgrowth in the cytosol. May function as a messenger ribonucleoprotein (mRNP) clearance factor. This Bos taurus (Bovine) protein is Putative helicase MOV-10 (MOV10).